The chain runs to 299 residues: Diphthine methyl ester synthase 1 (299 aa).

S-adenosyl-L-methionine contacts are provided by residues leucine 9, aspartate 85, glycine 88, 113–114 (SV), leucine 164, leucine 222, and histidine 247.

It belongs to the diphthine synthase family.

It is found in the cytoplasm. The enzyme catalyses 2-[(3S)-amino-3-carboxypropyl]-L-histidyl-[translation elongation factor 2] + 4 S-adenosyl-L-methionine = diphthine methyl ester-[translation elongation factor 2] + 4 S-adenosyl-L-homocysteine + 3 H(+). Its pathway is protein modification; peptidyl-diphthamide biosynthesis. Functionally, S-adenosyl-L-methionine-dependent methyltransferase that catalyzes four methylations of the modified target histidine residue in translation elongation factor 2 (EF-2), to form an intermediate called diphthine methyl ester. The four successive methylation reactions represent the second step of diphthamide biosynthesis. This chain is Diphthine methyl ester synthase 1 (DPH5), found in Candida albicans (strain SC5314 / ATCC MYA-2876) (Yeast).